We begin with the raw amino-acid sequence, 170 residues long: MSHRTSSTFRAERSFHSSSSSSSSSTSSSASRALPAQDPPMEKALSMFSDDFGSFMRPHSEPLAFPARPGGAGNIKTLGDAYEFAVDVRDFSPEDIIVTTSNNHIEVRAEKLAADGTVMNTFAHKCQLPEDVDPTSVTSALREDGSLTIRARRHPHTEHVQQTFRTEIKI.

Residues 1-39 (MSHRTSSTFRAERSFHSSSSSSSSSTSSSASRALPAQDP) are disordered. The required for localization to SC35 splicing speckles stretch occupies residues 1–71 (MSHRTSSTFR…PLAFPARPGG (71 aa)). A compositionally biased stretch (low complexity) spans 16 to 31 (HSSSSSSSSSTSSSAS). The 109-residue stretch at 62 to 170 (PLAFPARPGG…QQTFRTEIKI (109 aa)) folds into the sHSP domain.

This sequence belongs to the small heat shock protein (HSP20) family. In terms of assembly, interacts with C-terminal domain of actin-binding protein 280. As to expression, isoform 1 is highly expressed in adult and fetal heart, skeletal muscle, and at a much lower levels in adipose tissue and in aorta. Undetectable in other tissues. Isoform 2 and isoform 3 are poorly detected in heart.

The protein resides in the cytoplasm. It is found in the nucleus. The protein localises to the cajal body. The polypeptide is Heat shock protein beta-7 (HSPB7) (Homo sapiens (Human)).